Consider the following 366-residue polypeptide: Endophilin-B1 (366 aa).

Residues M1–L30 are membrane-binding amphipathic helix. Positions M1–E37 are required for membrane binding. The BAR domain occupies E27 to S261. 2 coiled-coil regions span residues E34–Q54 and K160–A185. Positions S306 to N366 constitute an SH3 domain.

It belongs to the endophilin family. As to quaternary structure, homodimer, and heterodimer with SH3GLB2. Binds BAX. Binds DNM1, HTT, AMPH, BIN1 and ARFGAP1.

The protein resides in the cytoplasm. Its subcellular location is the golgi apparatus membrane. It localises to the mitochondrion outer membrane. In terms of biological role, may be required for normal outer mitochondrial membrane dynamics. Required for coatomer-mediated retrograde transport in certain cells. May recruit other proteins to membranes with high curvature. May promote membrane fusion. This Gallus gallus (Chicken) protein is Endophilin-B1.